The chain runs to 69 residues: Large ribosomal subunit protein bL28 (69 aa).

This sequence belongs to the bacterial ribosomal protein bL28 family.

The chain is Large ribosomal subunit protein bL28 from Aquifex aeolicus (strain VF5).